The following is a 269-amino-acid chain: 3-methyl-2-oxobutanoate hydroxymethyltransferase (269 aa).

Mg(2+)-binding residues include aspartate 48 and aspartate 87. 3-methyl-2-oxobutanoate contacts are provided by residues 48-49, aspartate 87, and lysine 117; that span reads DS. Glutamate 119 contacts Mg(2+). Glutamate 186 functions as the Proton acceptor in the catalytic mechanism.

It belongs to the PanB family. As to quaternary structure, homodecamer; pentamer of dimers. Requires Mg(2+) as cofactor.

The protein localises to the cytoplasm. It catalyses the reaction 3-methyl-2-oxobutanoate + (6R)-5,10-methylene-5,6,7,8-tetrahydrofolate + H2O = 2-dehydropantoate + (6S)-5,6,7,8-tetrahydrofolate. Its pathway is cofactor biosynthesis; (R)-pantothenate biosynthesis; (R)-pantoate from 3-methyl-2-oxobutanoate: step 1/2. Functionally, catalyzes the reversible reaction in which hydroxymethyl group from 5,10-methylenetetrahydrofolate is transferred onto alpha-ketoisovalerate to form ketopantoate. The protein is 3-methyl-2-oxobutanoate hydroxymethyltransferase of Moorella thermoacetica (strain ATCC 39073 / JCM 9320).